The following is a 256-amino-acid chain: 1-(5-phosphoribosyl)-5-[(5-phosphoribosylamino)methylideneamino] imidazole-4-carboxamide isomerase (256 aa).

Catalysis depends on Asp8, which acts as the Proton acceptor. The Proton donor role is filled by Asp130.

It belongs to the HisA/HisF family.

It localises to the cytoplasm. It carries out the reaction 1-(5-phospho-beta-D-ribosyl)-5-[(5-phospho-beta-D-ribosylamino)methylideneamino]imidazole-4-carboxamide = 5-[(5-phospho-1-deoxy-D-ribulos-1-ylimino)methylamino]-1-(5-phospho-beta-D-ribosyl)imidazole-4-carboxamide. It participates in amino-acid biosynthesis; L-histidine biosynthesis; L-histidine from 5-phospho-alpha-D-ribose 1-diphosphate: step 4/9. The sequence is that of 1-(5-phosphoribosyl)-5-[(5-phosphoribosylamino)methylideneamino] imidazole-4-carboxamide isomerase from Chlorobium luteolum (strain DSM 273 / BCRC 81028 / 2530) (Pelodictyon luteolum).